Here is a 192-residue protein sequence, read N- to C-terminus: uncharacterized protein (192 aa).

The disordered stretch occupies residues 71 to 100 (NNVLPEPSKPNNPVVNPPVSPIQPKTDPEQ). The span at 77–91 (PSKPNNPVVNPPVSP) shows a compositional bias: pro residues.

This is an uncharacterized protein from Caenorhabditis elegans.